The following is a 407-amino-acid chain: Cell division control protein 12 (407 aa).

At Ser-2 the chain carries N-acetylserine. A Septin-type G domain is found at 31–314; it reads EGGTFTVMLC…ETYRRLRLEG (284 aa). The tract at residues 41–48 is G1 motif; the sequence is GESGLGKT. GTP contacts are provided by residues 41 to 48, Thr-75, Gly-101, 180 to 188, Gly-247, and Arg-263; these read GESGLGKT and KADTLTAQE. A G3 motif region spans residues 98 to 101; it reads DTPG. Positions 179-182 are G4 motif; it reads AKAD. Residues 344–406 are a coiled coil; the sequence is EEENALKKYF…KSLQVKKSHL (63 aa).

The protein belongs to the TRAFAC class TrmE-Era-EngA-EngB-Septin-like GTPase superfamily. Septin GTPase family. In terms of assembly, component of the septin complex which consists of CDC3, CDC10, CDC11, CDC12 and probably SHS1 and rearranges to a cortical collar of highly ordered filaments at the mother-bud-neck. A complex formed by CDC3, CDC10, CDC11 and CDC12 is capable of forming long filaments in vitro and the components seem to be present in a 2:2:2:2 arrangement in vivo. The filaments are proposed to be formed by the end-to-end polymerization of CDC3-CDC12-CDC11 complexes with CDC10 serving as a bridge to bundle the polymers into paired filaments. Component of the GIN4 complex composed of at least BNI5, CDC3, CDC10, CDC11, CDC12, GIN4, NAP1 and SHS1. Self-associates. Interacts with SYP1.

It is found in the membrane. It localises to the bud neck. Functionally, septins are GTPases involved in cytokinesis that assemble early in the cell cycle as a patch at the incipient bud site and form a ring approximate 15 minutes before bud emergence, which transforms into an hour-glass shaped collar of cortical filaments that spans both sides of the mother-bud neck. This collar persists until just before cytokinesis, when it splits into two rings that occupy opposite sides of the neck. The septins at the bud neck serve as a structural scaffold that recruits different components involved in diverse processes at specific stages during the cell cycle. Many proteins bind asymmetrically to the septin collar. The septin assembly is regulated by protein kinases GIN4 and/or CLA4. May act by recruiting MYO1 and HOF1, a protein involved in septation, to the site of cleavage. Septins are also involved in cell morphogenesis, bud site selection, chitin deposition, cell cycle regulation, cell compartmentalization and spore wall formation. The sequence is that of Cell division control protein 12 (CDC12) from Saccharomyces cerevisiae (strain ATCC 204508 / S288c) (Baker's yeast).